We begin with the raw amino-acid sequence, 613 residues long: Dihydroxy-acid dehydratase (613 aa).

Asp-81 is a binding site for Mg(2+). Position 122 (Cys-122) interacts with [2Fe-2S] cluster. Positions 123 and 124 each coordinate Mg(2+). Lys-124 carries the post-translational modification N6-carboxylysine. Cys-195 contributes to the [2Fe-2S] cluster binding site. Glu-491 lines the Mg(2+) pocket. Ser-517 functions as the Proton acceptor in the catalytic mechanism.

It belongs to the IlvD/Edd family. In terms of assembly, homodimer. The cofactor is [2Fe-2S] cluster. Requires Mg(2+) as cofactor.

It carries out the reaction (2R)-2,3-dihydroxy-3-methylbutanoate = 3-methyl-2-oxobutanoate + H2O. The catalysed reaction is (2R,3R)-2,3-dihydroxy-3-methylpentanoate = (S)-3-methyl-2-oxopentanoate + H2O. The protein operates within amino-acid biosynthesis; L-isoleucine biosynthesis; L-isoleucine from 2-oxobutanoate: step 3/4. It functions in the pathway amino-acid biosynthesis; L-valine biosynthesis; L-valine from pyruvate: step 3/4. Functionally, functions in the biosynthesis of branched-chain amino acids. Catalyzes the dehydration of (2R,3R)-2,3-dihydroxy-3-methylpentanoate (2,3-dihydroxy-3-methylvalerate) into 2-oxo-3-methylpentanoate (2-oxo-3-methylvalerate) and of (2R)-2,3-dihydroxy-3-methylbutanoate (2,3-dihydroxyisovalerate) into 2-oxo-3-methylbutanoate (2-oxoisovalerate), the penultimate precursor to L-isoleucine and L-valine, respectively. The protein is Dihydroxy-acid dehydratase of Buchnera aphidicola subsp. Schlechtendalia chinensis.